The primary structure comprises 489 residues: Glutamate--tRNA ligase (489 aa).

The short motif at 11–21 (PSPTGHLHIGN) is the 'HIGH' region element. A 'KMSKS' region motif is present at residues 252 to 256 (KLSKR). Position 255 (K255) interacts with ATP.

This sequence belongs to the class-I aminoacyl-tRNA synthetase family. Glutamate--tRNA ligase type 1 subfamily. As to quaternary structure, monomer.

The protein localises to the cytoplasm. The enzyme catalyses tRNA(Glu) + L-glutamate + ATP = L-glutamyl-tRNA(Glu) + AMP + diphosphate. Functionally, catalyzes the attachment of glutamate to tRNA(Glu) in a two-step reaction: glutamate is first activated by ATP to form Glu-AMP and then transferred to the acceptor end of tRNA(Glu). This Oceanobacillus iheyensis (strain DSM 14371 / CIP 107618 / JCM 11309 / KCTC 3954 / HTE831) protein is Glutamate--tRNA ligase.